The primary structure comprises 435 residues: Serine--tRNA ligase (435 aa).

238–240 (TAE) is an L-serine binding site. 269–271 (RKE) serves as a coordination point for ATP. L-serine is bound at residue glutamate 292. Residue 356–359 (EISS) participates in ATP binding. Residue serine 391 participates in L-serine binding.

Belongs to the class-II aminoacyl-tRNA synthetase family. Type-1 seryl-tRNA synthetase subfamily. In terms of assembly, homodimer. The tRNA molecule binds across the dimer.

Its subcellular location is the cytoplasm. It catalyses the reaction tRNA(Ser) + L-serine + ATP = L-seryl-tRNA(Ser) + AMP + diphosphate + H(+). The catalysed reaction is tRNA(Sec) + L-serine + ATP = L-seryl-tRNA(Sec) + AMP + diphosphate + H(+). Its pathway is aminoacyl-tRNA biosynthesis; selenocysteinyl-tRNA(Sec) biosynthesis; L-seryl-tRNA(Sec) from L-serine and tRNA(Sec): step 1/1. Its function is as follows. Catalyzes the attachment of serine to tRNA(Ser). Is also able to aminoacylate tRNA(Sec) with serine, to form the misacylated tRNA L-seryl-tRNA(Sec), which will be further converted into selenocysteinyl-tRNA(Sec). This chain is Serine--tRNA ligase, found in Leuconostoc mesenteroides subsp. mesenteroides (strain ATCC 8293 / DSM 20343 / BCRC 11652 / CCM 1803 / JCM 6124 / NCDO 523 / NBRC 100496 / NCIMB 8023 / NCTC 12954 / NRRL B-1118 / 37Y).